We begin with the raw amino-acid sequence, 88 residues long: uncharacterized protein (88 aa).

As to expression, expressed in a wide variety of tissues.

This is an uncharacterized protein from Homo sapiens (Human).